We begin with the raw amino-acid sequence, 141 residues long: LOB domain-containing protein 34 (141 aa).

The 104-residue stretch at 16–119 (NQCAACRHQR…SPLNYVAPVI (104 aa)) folds into the LOB domain.

This sequence belongs to the LOB domain-containing protein family.

The polypeptide is LOB domain-containing protein 34 (LBD34) (Arabidopsis thaliana (Mouse-ear cress)).